Here is a 177-residue protein sequence, read N- to C-terminus: Large ribosomal subunit protein uL10 (177 aa).

The protein belongs to the universal ribosomal protein uL10 family. Part of the ribosomal stalk of the 50S ribosomal subunit. The N-terminus interacts with L11 and the large rRNA to form the base of the stalk. The C-terminus forms an elongated spine to which L12 dimers bind in a sequential fashion forming a multimeric L10(L12)X complex.

In terms of biological role, forms part of the ribosomal stalk, playing a central role in the interaction of the ribosome with GTP-bound translation factors. This is Large ribosomal subunit protein uL10 from Legionella pneumophila (strain Paris).